We begin with the raw amino-acid sequence, 303 residues long: Protein transport protein SEC13-2 (303 aa).

WD repeat units lie at residues 7–46 (AHEG…NSSS), 53–95 (GHEG…GKMQ), 102–143 (VHSA…IAST), 149–202 (AHKF…ETYV), 209–251 (GHKD…KKND), and 261–300 (KFEQ…KWEE).

It belongs to the WD repeat SEC13 family. In terms of assembly, the COPII coat is composed of at least 5 proteins: the SEC23/24 complex, the SEC13/31 complex, and the protein SAR1. Component of the nuclear pore complex (NPC). NPC constitutes the exclusive means of nucleocytoplasmic transport. NPCs allow the passive diffusion of ions and small molecules and the active, nuclear transport receptor-mediated bidirectional transport of macromolecules such as proteins, RNAs, ribonucleoparticles (RNPs), and ribosomal subunits across the nuclear envelope. Due to its 8-fold rotational symmetry, all subunits are present with 8 copies or multiples thereof.

It is found in the cytoplasmic vesicle. The protein resides in the COPII-coated vesicle membrane. Its subcellular location is the endoplasmic reticulum membrane. The protein localises to the nucleus. It localises to the nuclear pore complex. Component of the coat protein complex II (COPII) which promotes the formation of transport vesicles from the endoplasmic reticulum (ER). The coat has two main functions, the physical deformation of the endoplasmic reticulum membrane into vesicles and the selection of cargo molecules. It also functions as a component of the nuclear pore complex (NPC). NPC components, collectively referred to as nucleoporins (NUPs), can play the role of both NPC structural components and of docking or interaction partners for transiently associated nuclear transport factors. SEC13 is required for efficient mRNA export from the nucleus to the cytoplasm and for correct nuclear pore biogenesis and distribution. This chain is Protein transport protein SEC13-2 (SEC132), found in Candida glabrata (strain ATCC 2001 / BCRC 20586 / JCM 3761 / NBRC 0622 / NRRL Y-65 / CBS 138) (Yeast).